The sequence spans 69 residues: Conotoxin AbVIF (69 aa).

A signal peptide spans V1 to A17. Residues E18–S40 constitute a propeptide that is removed on maturation. The disordered stretch occupies residues S20–K41. Cystine bridges form between C43–C57, C50–C61, and C56–C68.

It belongs to the conotoxin O1 superfamily. In terms of tissue distribution, expressed by the venom duct.

It is found in the secreted. The polypeptide is Conotoxin AbVIF (Conus abbreviatus (Abbreviated cone)).